A 252-amino-acid chain; its full sequence is 3-dehydroquinate dehydratase (252 aa).

Residues Ser-21, 46–48, and Arg-82 contribute to the 3-dehydroquinate site; that span reads EWR. The active-site Proton donor/acceptor is the His-143. The active-site Schiff-base intermediate with substrate is the Lys-170. Arg-213, Ser-232, and Gln-236 together coordinate 3-dehydroquinate.

This sequence belongs to the type-I 3-dehydroquinase family. Homodimer.

It carries out the reaction 3-dehydroquinate = 3-dehydroshikimate + H2O. It functions in the pathway metabolic intermediate biosynthesis; chorismate biosynthesis; chorismate from D-erythrose 4-phosphate and phosphoenolpyruvate: step 3/7. Functionally, involved in the third step of the chorismate pathway, which leads to the biosynthesis of aromatic amino acids. Catalyzes the cis-dehydration of 3-dehydroquinate (DHQ) and introduces the first double bond of the aromatic ring to yield 3-dehydroshikimate. The polypeptide is 3-dehydroquinate dehydratase (Escherichia coli (strain 55989 / EAEC)).